Reading from the N-terminus, the 478-residue chain is Lactate utilization protein B (478 aa).

4Fe-4S ferredoxin-type domains follow at residues G303–Y333 and Y352–Q381. Residues C312, C315, C318, C322, C365, C368, and C372 each contribute to the [4Fe-4S] cluster site.

This sequence belongs to the LutB/YkgF family.

In terms of biological role, is involved in L-lactate degradation and allows cells to grow with lactate as the sole carbon source. Has probably a role as an electron transporter during oxidation of L-lactate. The polypeptide is Lactate utilization protein B (Oceanobacillus iheyensis (strain DSM 14371 / CIP 107618 / JCM 11309 / KCTC 3954 / HTE831)).